The following is a 653-amino-acid chain: Poly [ADP-ribose] polymerase 2 (653 aa).

An SAP 1 domain is found at 2–36 (SARLRVADVRAELQRRGLDVSGTKPALVRRLDAAI). The interval 64 to 84 (NCGNNKRKRSGDGGEEGNGDT) is disordered. Positions 69-72 (KRKR) match the Nuclear localization signal motif. Residues 91-125 (LEGMSYRELQGLAKARGVAANGGKKDVIQRLLSAT) form the SAP 2 domain. Residues 179-276 (NYHVLQVGDE…KNFKCYAKKY (98 aa)) enclose the WGR domain. The region spanning 301-419 (ETKLETRIAQ…EIEIATKLLE (119 aa)) is the PARP alpha-helical domain. A PARP catalytic domain is found at 427 to 653 (DPLYARYKQL…LHVNFNFKRR (227 aa)).

Belongs to the ARTD/PARP family.

Its subcellular location is the nucleus. The catalysed reaction is NAD(+) + (ADP-D-ribosyl)n-acceptor = nicotinamide + (ADP-D-ribosyl)n+1-acceptor + H(+).. It carries out the reaction L-aspartyl-[protein] + NAD(+) = 4-O-(ADP-D-ribosyl)-L-aspartyl-[protein] + nicotinamide. The enzyme catalyses L-glutamyl-[protein] + NAD(+) = 5-O-(ADP-D-ribosyl)-L-glutamyl-[protein] + nicotinamide. In terms of biological role, involved in the base excision repair (BER) pathway, by catalyzing the poly(ADP-ribosyl)ation of a limited number of acceptor proteins involved in chromatin architecture and in DNA metabolism. This modification follows DNA damages and appears as an obligatory step in a detection/signaling pathway leading to the reparation of DNA strand breaks. The sequence is that of Poly [ADP-ribose] polymerase 2 (PARP2) from Zea mays (Maize).